Reading from the N-terminus, the 420-residue chain is Protein TabA (420 aa).

Lysine 57 bears the N6-(pyridoxal phosphate)lysine mark.

Belongs to the Orn/Lys/Arg decarboxylase class-II family. Pyridoxal 5'-phosphate is required as a cofactor.

Involved in tabtoxin production and pathogenicity. This is Protein TabA (tabA) from Pseudomonas amygdali pv. tabaci (Pseudomonas syringae pv. tabaci).